Reading from the N-terminus, the 356-residue chain is D-alanine--D-alanine ligase (356 aa).

An ATP-grasp domain is found at 134–339 (KQLFAHRGLP…YSDLIKKLIE (206 aa)). Residue 167 to 222 (HDKLEYPVFVKPANLGSSVGISKCNNEEELKNGIEEAFQFDRKLVIEQGIEAREIE) participates in ATP binding. The Mg(2+) site is built by Asp-293, Glu-306, and Asn-308.

It belongs to the D-alanine--D-alanine ligase family. The cofactor is Mg(2+). Mn(2+) is required as a cofactor.

The protein resides in the cytoplasm. The catalysed reaction is 2 D-alanine + ATP = D-alanyl-D-alanine + ADP + phosphate + H(+). It functions in the pathway cell wall biogenesis; peptidoglycan biosynthesis. Its function is as follows. Cell wall formation. This chain is D-alanine--D-alanine ligase, found in Staphylococcus saprophyticus subsp. saprophyticus (strain ATCC 15305 / DSM 20229 / NCIMB 8711 / NCTC 7292 / S-41).